Consider the following 71-residue polypeptide: ATP synthase F(0) complex subunit e, mitochondrial (71 aa).

K34 is modified (N6-acetyllysine). S68 carries the post-translational modification Phosphoserine.

It belongs to the ATPase e subunit family. In terms of assembly, component of the ATP synthase complex composed at least of ATP5F1A/subunit alpha, ATP5F1B/subunit beta, ATP5MC1/subunit c (homooctomer), MT-ATP6/subunit a, MT-ATP8/subunit 8, ATP5ME/subunit e, ATP5MF/subunit f, ATP5MG/subunit g, ATP5MK/subunit k, ATP5MJ/subunit j, ATP5F1C/subunit gamma, ATP5F1D/subunit delta, ATP5F1E/subunit epsilon, ATP5PF/subunit F6, ATP5PB/subunit b, ATP5PD/subunit d, ATP5PO/subunit OSCP. ATP synthase complex consists of a soluble F(1) head domain (subunits alpha(3) and beta(3)) - the catalytic core - and a membrane F(0) domain - the membrane proton channel (subunits c, a, 8, e, f, g, k and j). These two domains are linked by a central stalk (subunits gamma, delta, and epsilon) rotating inside the F1 region and a stationary peripheral stalk (subunits F6, b, d, and OSCP). In terms of tissue distribution, mammary gland, liver, kidney, heart, spleen, brain and lung.

The protein localises to the mitochondrion. It is found in the mitochondrion inner membrane. In terms of biological role, subunit e, of the mitochondrial membrane ATP synthase complex (F(1)F(0) ATP synthase or Complex V) that produces ATP from ADP in the presence of a proton gradient across the membrane which is generated by electron transport complexes of the respiratory chain. ATP synthase complex consist of a soluble F(1) head domain - the catalytic core - and a membrane F(1) domain - the membrane proton channel. These two domains are linked by a central stalk rotating inside the F(1) region and a stationary peripheral stalk. During catalysis, ATP synthesis in the catalytic domain of F(1) is coupled via a rotary mechanism of the central stalk subunits to proton translocation. In vivo, can only synthesize ATP although its ATP hydrolase activity can be activated artificially in vitro. Part of the complex F(0) domain. This is ATP synthase F(0) complex subunit e, mitochondrial from Mus musculus (Mouse).